Consider the following 293-residue polypeptide: MSIFKGSAVALITPFTQDGVNFDELKKLLEWHIKNKTDAIVICGTTGEASTMSLNERKETIKYTVETVNKRIPVIAGTGSNNTKSSVEMSIWAEKIGVDGVLVITPYYNKTTQKGLIEHFKSINDNINIPIILYNVPGRTGLNILPETLYAMRDLKNICAIKEASGNISQIAKIKALCRDRFDIYSGNDDQIVPILSLGGSGVISVLANIIPQTVHDMCFSYFQGKTTDALNLQLDTLSLTNSLFIETNPIPIKTAMNLLNFNAGPLRLPLCSMDEKNLNTLKTDLKGYGLIK.

Thr-46 contributes to the pyruvate binding site. Residue Tyr-134 is the Proton donor/acceptor of the active site. The active-site Schiff-base intermediate with substrate is Lys-162. Residue Ile-204 coordinates pyruvate.

It belongs to the DapA family. In terms of assembly, homotetramer; dimer of dimers.

The protein localises to the cytoplasm. The catalysed reaction is L-aspartate 4-semialdehyde + pyruvate = (2S,4S)-4-hydroxy-2,3,4,5-tetrahydrodipicolinate + H2O + H(+). Its pathway is amino-acid biosynthesis; L-lysine biosynthesis via DAP pathway; (S)-tetrahydrodipicolinate from L-aspartate: step 3/4. In terms of biological role, catalyzes the condensation of (S)-aspartate-beta-semialdehyde [(S)-ASA] and pyruvate to 4-hydroxy-tetrahydrodipicolinate (HTPA). This is 4-hydroxy-tetrahydrodipicolinate synthase 1 from Clostridium acetobutylicum (strain ATCC 824 / DSM 792 / JCM 1419 / IAM 19013 / LMG 5710 / NBRC 13948 / NRRL B-527 / VKM B-1787 / 2291 / W).